Reading from the N-terminus, the 266-residue chain is Type III pantothenate kinase (266 aa).

6-13 serves as a coordination point for ATP; the sequence is DIGNSRIK. Substrate is bound by residues Tyr94 and 101-104; that span reads GIDR. The active-site Proton acceptor is the Asp103. Asp128 lines the K(+) pocket. Thr131 is a binding site for ATP. Thr183 is a binding site for substrate.

Belongs to the type III pantothenate kinase family. Homodimer. NH4(+) serves as cofactor. The cofactor is K(+).

The protein resides in the cytoplasm. The enzyme catalyses (R)-pantothenate + ATP = (R)-4'-phosphopantothenate + ADP + H(+). It functions in the pathway cofactor biosynthesis; coenzyme A biosynthesis; CoA from (R)-pantothenate: step 1/5. Catalyzes the phosphorylation of pantothenate (Pan), the first step in CoA biosynthesis. This is Type III pantothenate kinase from Nitrosococcus oceani (strain ATCC 19707 / BCRC 17464 / JCM 30415 / NCIMB 11848 / C-107).